We begin with the raw amino-acid sequence, 413 residues long: Gamma-glutamyl phosphate reductase (413 aa).

Belongs to the gamma-glutamyl phosphate reductase family.

It localises to the cytoplasm. The catalysed reaction is L-glutamate 5-semialdehyde + phosphate + NADP(+) = L-glutamyl 5-phosphate + NADPH + H(+). It functions in the pathway amino-acid biosynthesis; L-proline biosynthesis; L-glutamate 5-semialdehyde from L-glutamate: step 2/2. In terms of biological role, catalyzes the NADPH-dependent reduction of L-glutamate 5-phosphate into L-glutamate 5-semialdehyde and phosphate. The product spontaneously undergoes cyclization to form 1-pyrroline-5-carboxylate. The protein is Gamma-glutamyl phosphate reductase of Rhodococcus jostii (strain RHA1).